The primary structure comprises 354 residues: MVSGVTYLKRGAVFGSGAFGTALACVLAKKCESVSVWHMNANEARVVNQKHENVYFLPGAPLPANLTFTADAEECAKGAEIVLFVIPTQFLRGFLQKNSHILRNHVVSRNVPVVMCSKGIERSSLLFPAQILEEFLPNYPIGVIAGPSFAIEVAKGMLTNVCTAAADIDMARKIQRIMTTSDGSFRCWATTDVIGCEIASAMKNVLAIASGALKGLGTENNARAALISRGLLEIRDLTLALGGTGEAVFGLPGLGDLLLTCSSELSRNFTVGMKLGKGISLEEIKRTSKAVAEGVATAEPLERLAKKHNVHLPICHEVYNVLYANGCAKRSFKKLNSCKLADEGLPALPRTSKM.

Residues 15–20, F90, K118, and A150 contribute to the NAD(+) site; that span reads GSGAFG. K118 serves as a coordination point for substrate. K203 (proton acceptor) is an active-site residue. NAD(+) contacts are provided by R267 and E293. 267–268 is a binding site for substrate; sequence RN. Positions 352-354 match the Microbody targeting signal motif; the sequence is SKM.

The protein belongs to the NAD-dependent glycerol-3-phosphate dehydrogenase family.

Its subcellular location is the glycosome. It carries out the reaction sn-glycerol 3-phosphate + NAD(+) = dihydroxyacetone phosphate + NADH + H(+). The chain is Glycerol-3-phosphate dehydrogenase [NAD(+)], glycosomal (GPD) from Trypanosoma brucei rhodesiense.